An 82-amino-acid polypeptide reads, in one-letter code: Small ribosomal subunit protein bS16 (82 aa).

Belongs to the bacterial ribosomal protein bS16 family.

The protein is Small ribosomal subunit protein bS16 of Aliivibrio fischeri (strain ATCC 700601 / ES114) (Vibrio fischeri).